A 258-amino-acid chain; its full sequence is Protein IMPACT homolog (258 aa).

The 105-residue stretch at 10–114 (EELEAVEAIY…TELDGVLYVE (105 aa)) folds into the RWD domain. A Glycyl lysine isopeptide (Lys-Gly) (interchain with G-Cter in ubiquitin) cross-link involves residue Lys-187.

The protein belongs to the IMPACT family. Interacts (via N-terminus) with GCN1 (via C-terminus); this interaction reduces the GCN1-GCN20 complex formation and prevents the interaction of GCN1 with GCN2 protein kinase and GCN2 activation in amino acid-starved cells. Interacts (via C-terminus) with ACT1; this interaction occurs in a GCN1-independent manner. Interacts with RPL39; this interaction occurs in a GCN1-independent manner. Associates (via middle region) with ribosomes; this association occurs in a GCN1-independent manner and persists under amino acid starvation conditions.

It is found in the cytoplasm. The protein localises to the nucleus. Functionally, translational regulator that ensures constant high levels of translation under amino acid starvation. Plays a role as a negative regulator of the GCN2 kinase activity; impairs GCN1-mediated GCN2 activation, and hence GCN2-mediated eIF-2-alpha phosphorylation in amino acid-starved cells and subsequent down-regulation of protein synthesis. In normal conditions, it resides in a actin complex and has no activity. This chain is Protein IMPACT homolog (YIH1), found in Saccharomyces cerevisiae (strain ATCC 204508 / S288c) (Baker's yeast).